Consider the following 751-residue polypeptide: Semaphorin-3C (751 aa).

The signal sequence occupies residues 1 to 20 (MAFRTICVLVGVFICSICVK). In terms of domain architecture, Sema spans 28–511 (RVYLTFDELR…SNEGVSQVSL (484 aa)). Residue asparagine 81 is glycosylated (N-linked (GlcNAc...) asparagine). Cysteine 101 and cysteine 112 are joined by a disulfide. Asparagine 123 carries N-linked (GlcNAc...) asparagine glycosylation. A disulfide bond links cysteine 130 and cysteine 139. 2 N-linked (GlcNAc...) asparagine glycosylation sites follow: asparagine 252 and asparagine 268. 2 disulfides stabilise this stretch: cysteine 266-cysteine 378 and cysteine 290-cysteine 338. Asparagine 465 is a glycosylation site (N-linked (GlcNAc...) asparagine). Cysteine 514 and cysteine 532 are joined by a disulfide. One can recognise an Ig-like C2-type domain in the interval 571 to 655 (AYRNAAEIVQ…TENSFKQTIA (85 aa)). Asparagine 585 and asparagine 586 each carry an N-linked (GlcNAc...) asparagine glycan. A disulfide bridge connects residues cysteine 643 and cysteine 709. Positions 712–731 (TRQQHQQGDESQKMRGDYGK) are enriched in basic and acidic residues. The segment at 712–751 (TRQQHQQGDESQKMRGDYGKLKALINSRKSRNRRNQLPES) is disordered.

It belongs to the semaphorin family. Interacts with PLXND1. As to expression, expressed intensely in the heart, skeletal muscle, colon, small intestine, ovary, testis, and prostate. Faint expression ubiquitously among other organs, including brain.

It localises to the secreted. Functionally, binds to plexin family members and plays an important role in the regulation of developmental processes. Required for normal cardiovascular development during embryogenesis. Functions as attractant for growing axons, and thereby plays an important role in axon growth and axon guidance. The polypeptide is Semaphorin-3C (SEMA3C) (Homo sapiens (Human)).